An 802-amino-acid chain; its full sequence is Potassium channel AKT2/3 (802 aa).

Over 1–79 the chain is Cytoplasmic; the sequence is MDLKYSASHC…PMDSRYRCWE (79 aa). Residues 80-100 traverse the membrane as a helical segment; sequence FYMVLLVAYSAWVYPFEVAFL. Over 101 to 109 the chain is Extracellular; that stretch reads NSSPKRNLC. Residues 110 to 130 form a helical membrane-spanning segment; that stretch reads IADNIVDLFFAVDIVLTFFVA. At 131 to 153 the chain is on the cytoplasmic side; the sequence is YIDERTQLLVREPKQIAVRYLST. The helical transmembrane segment at 154-174 threads the bilayer; that stretch reads WFLMDVASTIPFDAIGYLITG. The Extracellular portion of the chain corresponds to 175–183; that stretch reads TSTLNITCN. A glycan (N-linked (GlcNAc...) asparagine) is linked at asparagine 179. A helical; Voltage-sensor transmembrane segment spans residues 184–204; the sequence is LLGLLRFWRLRRVKHLFTRLE. Over 205–218 the chain is Cytoplasmic; sequence KDIRYSYFWIRCFR. The chain crosses the membrane as a helical span at residues 219-239; that stretch reads LLSVTLFLVHCAGCSYYLIAD. Topologically, residues 240–265 are extracellular; the sequence is RYPHQGKTWTDAIPNFTETSLSIRYI. Residue asparagine 254 is glycosylated (N-linked (GlcNAc...) asparagine). The segment at residues 266-285 is an intramembrane region (pore-forming); the sequence is AAIYWSITTMTTVGYGDLHA. At 286–288 the chain is on the extracellular side; the sequence is SNT. A helical transmembrane segment spans residues 289-309; the sequence is IEMVFITVYMLFNLGLTAYLI. The Cytoplasmic portion of the chain corresponds to 310–802; it reads GNMTNLVVEG…KLYFVVNKII (493 aa). 394 to 513 is a binding site for a nucleoside 3',5'-cyclic phosphate; that stretch reads LFKGVSREIL…ATMLKNFLQH (120 aa). ANK repeat units lie at residues 540–569, 573–602, 606–636, 637–666, and 670–699; these read NIAS…SPDI, KGKT…NIHI, NGNS…SDPH, IAGD…NVDT, and HGVT…DVVC. The KHA domain maps to 725–802; it reads RVSIYRGHPL…KLYFVVNKII (78 aa).

Belongs to the potassium channel family. Plant (TC 1.A.1.4) subfamily. The potassium channel is probably composed of a homo- or heterotetrameric complex of pore-forming subunits. Interacts with the phosphatase PPC2A and the kinase CIPK6. May interact with AKT1, KAT1 and KAT3. Interacts with SLAC1. Dephosphorylated by PP2CA. Expressed mainly in the phloem tissues throughout the plant but also, at a lower level, in leaf epiderm, mesophyll and guard cells.

The protein resides in the endoplasmic reticulum membrane. Its function is as follows. Highly selective and weak inward-rectifying potassium channel. Plays a role in both loading and unloading potassium into/from the phloem sap. Seems to control sugar loading into phloem via a voltage-dependent process. Blocked by physiological concentrations of external calcium and by external acidification. May interact with the cytoskeleton or with regulatory proteins. Dephosphorylation by PP2CA not only leads to the inhibition of potassium currents but also to an increase of the voltage-dependence of the channel. Regulated by the CBL4/CIPK6 calcium sensor/protein kinase complex via a kinase interaction-dependent but phosphorylation-independent translocation of the channel to the plasma membrane. The chain is Potassium channel AKT2/3 (AKT2) from Arabidopsis thaliana (Mouse-ear cress).